Consider the following 92-residue polypeptide: Protease inhibitors (92 aa).

The signal sequence occupies residues 1–19 (MKFALALCAAVLLVVLVQA). Pacifastin domains follow at residues 20–54 (EEKC…CQPA) and 57–92 (EISC…CPNQ). 6 disulfides stabilise this stretch: Cys23–Cys38, Cys33–Cys51, Cys36–Cys46, Cys60–Cys75, Cys70–Cys89, and Cys73–Cys84. Residue Thr65 is glycosylated (O-linked (Fuc) threonine).

Belongs to the protease inhibitor I19 family. In terms of tissue distribution, brain and fat body.

It is found in the secreted. Both LCMI I and II are inhibitors of chymotrypsin and elastase (in vitro). They both inhibit the prophenol oxidase activation cascade. This is Protease inhibitors from Locusta migratoria (Migratory locust).